The chain runs to 569 residues: Proton-coupled zinc antiporter SLC30A9, mitochondrial (569 aa).

A mitochondrion-targeting transit peptide spans 1–68 (MLPGLAAAAA…IGTLSQVKLY (68 aa)). 5 helical membrane passes run 240 to 260 (VVMV…LAWI), 315 to 335 (GVGI…MGLL), 343 to 363 (LLWA…TLLV), 393 to 413 (VILL…TCMG), and 425 to 445 (SLGS…LIYT). The LXXLL motif signature appears at 463-467 (LTELL).

Belongs to the cation diffusion facilitator (CDF) transporter (TC 2.A.4) family. SLC30A subfamily. As to quaternary structure, interacts with GRIP1, ESR1, AR and CTNNB1.

It is found in the mitochondrion membrane. Its subcellular location is the nucleus. It localises to the endoplasmic reticulum. The enzyme catalyses Zn(2+)(in) + 2 H(+)(out) = Zn(2+)(out) + 2 H(+)(in). In terms of biological role, mitochondrial proton-coupled zinc ion antiporter mediating the export of zinc from the mitochondria and involved in zinc homeostasis, zinc mobilization as well as mitochondrial morphology and health. In nucleus, functions as a secondary coactivator for nuclear receptors by cooperating with p160 coactivators subtypes. Plays a role in transcriptional activation of Wnt-responsive genes. The chain is Proton-coupled zinc antiporter SLC30A9, mitochondrial (SLC30A9) from Pongo abelii (Sumatran orangutan).